Consider the following 264-residue polypeptide: H-2 class II histocompatibility antigen, I-A beta chain (264 aa).

The first 31 residues, 1-31, serve as a signal peptide directing secretion; that stretch reads MVWLPRVPCVAAVILLLTVLSPPVALVRDSR. Residues 32–121 are beta-1; it reads PWFLEYCKSE…IFDNFLVPRR (90 aa). Topologically, residues 32–225 are extracellular; the sequence is PWFLEYCKSE…KAQSTSAQNK (194 aa). Disulfide bonds link C42-C106 and C144-C200. The N-linked (GlcNAc...) asparagine glycan is linked to N46. The beta-2 stretch occupies residues 122 to 215; that stretch reads VEPTVTVYPT…SLTDPVTVEW (94 aa). The Ig-like C1-type domain maps to 124-214; it reads PTVTVYPTKT…PSLTDPVTVE (91 aa). The interval 216–225 is connecting peptide; it reads KAQSTSAQNK. The chain crosses the membrane as a helical span at residues 226–248; it reads MLSGVGGFVLGLLFLRAGLFIYF. At 249–264 the chain is on the cytoplasmic side; that stretch reads RNQKGQSGLQPTGLLS.

Belongs to the MHC class II family. Post-translationally, ubiquitinated in immature dendritic cells leading to down-regulation of MHC class II.

The protein localises to the membrane. The chain is H-2 class II histocompatibility antigen, I-A beta chain (H2-Eb1) from Mus musculus (Mouse).